The chain runs to 275 residues: MATYLVGDLQGCYDELQRLLEKVQFDSTQDQLYLVGDLVARGDKSLECLRFVKSLGKSAKTVLGNHDLHLISTALGIKKVKVRDRVDAIFHAPDFEELIDWLRHQPLLVHNEQQNFLMTHAGISPDWDLATAKQCAHEVENVLRHGDYHNLIENMYENRPDRWHDDLQGLDRLRYSINVFTRMRFCYWDHRLDFDCKLPPESAPEELTPWFNLANPLYQTIPIVFGHWASLVNTTTPNNIYALDTGCVWGNRMTMLRWEDKQYFSQHAVKNYRDF.

This sequence belongs to the Ap4A hydrolase family.

The catalysed reaction is P(1),P(4)-bis(5'-adenosyl) tetraphosphate + H2O = 2 ADP + 2 H(+). Functionally, hydrolyzes diadenosine 5',5'''-P1,P4-tetraphosphate to yield ADP. This chain is Bis(5'-nucleosyl)-tetraphosphatase, symmetrical (apaH), found in Pasteurella multocida (strain Pm70).